The primary structure comprises 220 residues: Deoxyribose-phosphate aldolase (220 aa).

The active-site Proton donor/acceptor is the Asp-89. Lys-151 (schiff-base intermediate with acetaldehyde) is an active-site residue. The active-site Proton donor/acceptor is the Lys-180.

Belongs to the DeoC/FbaB aldolase family. DeoC type 1 subfamily.

The protein resides in the cytoplasm. The catalysed reaction is 2-deoxy-D-ribose 5-phosphate = D-glyceraldehyde 3-phosphate + acetaldehyde. Its pathway is carbohydrate degradation; 2-deoxy-D-ribose 1-phosphate degradation; D-glyceraldehyde 3-phosphate and acetaldehyde from 2-deoxy-alpha-D-ribose 1-phosphate: step 2/2. Its function is as follows. Catalyzes a reversible aldol reaction between acetaldehyde and D-glyceraldehyde 3-phosphate to generate 2-deoxy-D-ribose 5-phosphate. This is Deoxyribose-phosphate aldolase from Staphylococcus carnosus (strain TM300).